Reading from the N-terminus, the 392-residue chain is Acetyl-CoA acetyltransferase (392 aa).

Cys-89 (acyl-thioester intermediate) is an active-site residue. Catalysis depends on proton acceptor residues His-348 and Cys-378.

This sequence belongs to the thiolase-like superfamily. Thiolase family. As to quaternary structure, homotetramer.

Its subcellular location is the cytoplasm. The catalysed reaction is 2 acetyl-CoA = acetoacetyl-CoA + CoA. The protein operates within biopolymer metabolism; poly-(R)-3-hydroxybutanoate biosynthesis. Its pathway is metabolic intermediate biosynthesis; (R)-mevalonate biosynthesis; (R)-mevalonate from acetyl-CoA: step 1/3. The protein is Acetyl-CoA acetyltransferase of Shinella zoogloeoides (Crabtreella saccharophila).